We begin with the raw amino-acid sequence, 256 residues long: Cytoplasmic envelopment protein 1 (256 aa).

The protein belongs to the herpesviridae cytoplasmic envelopment protein 1 family.

The protein resides in the virion. It is found in the virion tegument. Its subcellular location is the host cytoplasm. It localises to the host Golgi apparatus. Its function is as follows. Plays a critical role in cytoplasmic virus egress. Participates in the final step of tegumentation and envelope acquisition within the host cytoplasm. This chain is Cytoplasmic envelopment protein 1 (U75), found in Homo sapiens (Human).